Consider the following 956-residue polypeptide: Ubiquitin carboxyl-terminal hydrolase CYLD (956 aa).

An interaction with TRIP region spans residues 106-593; that stretch reads CEERFSLFKN…LEIMIGKKKG (488 aa). 2 CAP-Gly domains span residues 153 to 198 and 253 to 286; these read LAER…VFVA and DVLP…VQLC. The disordered stretch occupies residues 309-353; sequence SVTQERRPPKLAFMSRGVGDKGSSSHNKPKATGSTSDPGNRNRSE. Polar residues predominate over residues 330 to 349; it reads GSSSHNKPKATGSTSDPGNR. Residue Ser387 is modified to Phosphoserine. The disordered stretch occupies residues 392-411; sequence STDFDRSSPPLQPPPVNSLS. The interval 394–469 is interaction with TRAF2; sequence DFDRSSPPLQ…LAMPPGNSHG (76 aa). Ser418 and Ser422 each carry phosphoserine. An interaction with IKBKG/NEMO region spans residues 470–684; that stretch reads LEVGSLAEVK…FTSEEKDPEE (215 aa). Positions 492-535 constitute a CAP-Gly 3 domain; sequence GQPPGLNEVLAGLELEDECAGCTDGTFRGTRYFTCALKKALFVK. Residues 592–950 enclose the USP domain; sequence KGIQGHYNSC…DAYMCMYQSP (359 aa). Cys601 functions as the Nucleophile in the catalytic mechanism. The B-box stretch occupies residues 781-833; it reads LEDTPRQCRICGGLAMYECRECYDDPDISAGKIKQFCKTCNTQVHLHPKRLNH. 8 residues coordinate Zn(2+): Cys788, Cys791, Cys799, Cys802, Cys817, Cys820, His825, and His833. The active-site Proton acceptor is His871.

This sequence belongs to the peptidase C19 family. Interacts (via CAP-Gly domain) with IKBKG/NEMO (via proline-rich C-terminal region). Interacts with TRAF2 and TRIP. Interacts with PLK1, DVL1, DVL3, MAVS, TBK1, IKKE and RIGI. Interacts (via CAP-Gly domain) with microtubules. Interacts with HDAC6 and BCL3. Interacts with MAP3K7. Identified in a complex with TRAF6 and SQSTM1. Interacts with OPTN and SQSTM1. Interacts with CEP350. Interacts with RNF31; the interaction is indirect and is mediated via SPATA2. Interacts with SPATA2 (via the PUB domain); the interaction is direct and recruits CYLD to the LUBAC complex, thereby regulating TNF-alpha-induced necroptosis. In terms of processing, phosphorylated on several serine residues by IKKA and/or IKKB in response to immune stimuli. Phosphorylation requires IKBKG. Phosphorylation abolishes TRAF2 deubiquitination, interferes with the activation of Jun kinases, and strongly reduces CD40-dependent gene activation by NF-kappa-B. Post-translationally, ubiquitinated. Polyubiquitinated in hepatocytes treated with palmitic acid. Ubiquitination is mediated by E3 ligase TRIM47 and leads to proteasomal degradation.

It localises to the cytoplasm. The protein resides in the perinuclear region. The protein localises to the cytoskeleton. Its subcellular location is the cell membrane. It is found in the microtubule organizing center. It localises to the centrosome. The protein resides in the spindle. The protein localises to the cilium basal body. The catalysed reaction is Thiol-dependent hydrolysis of ester, thioester, amide, peptide and isopeptide bonds formed by the C-terminal Gly of ubiquitin (a 76-residue protein attached to proteins as an intracellular targeting signal).. In terms of biological role, deubiquitinase that specifically cleaves 'Lys-63'- and linear 'Met-1'-linked polyubiquitin chains and is involved in NF-kappa-B activation and TNF-alpha-induced necroptosis. Negatively regulates NF-kappa-B activation by deubiquitinating upstream signaling factors. Contributes to the regulation of cell survival, proliferation and differentiation via its effects on NF-kappa-B activation. Negative regulator of Wnt signaling. Inhibits HDAC6 and thereby promotes acetylation of alpha-tubulin and stabilization of microtubules. Plays a role in the regulation of microtubule dynamics, and thereby contributes to the regulation of cell proliferation, cell polarization, cell migration, and angiogenesis. Required for normal cell cycle progress and normal cytokinesis. Inhibits nuclear translocation of NF-kappa-B. Plays a role in the regulation of inflammation and the innate immune response, via its effects on NF-kappa-B activation. Dispensable for the maturation of intrathymic natural killer cells, but required for the continued survival of immature natural killer cells. Negatively regulates TNFRSF11A signaling and osteoclastogenesis. Involved in the regulation of ciliogenesis, allowing ciliary basal bodies to migrate and dock to the plasma membrane; this process does not depend on NF-kappa-B activation. Ability to remove linear ('Met-1'-linked) polyubiquitin chains regulates innate immunity and TNF-alpha-induced necroptosis: recruited to the LUBAC complex via interaction with SPATA2 and restricts linear polyubiquitin formation on target proteins. Regulates innate immunity by restricting linear polyubiquitin formation on RIPK2 in response to NOD2 stimulation. Involved in TNF-alpha-induced necroptosis by removing linear ('Met-1'-linked) polyubiquitin chains from RIPK1, thereby regulating the kinase activity of RIPK1. Negatively regulates intestinal inflammation by removing 'Lys-63' linked polyubiquitin chain of NLRP6, thereby reducing the interaction between NLRP6 and PYCARD/ASC and formation of the NLRP6 inflammasome. Does not catalyze deubiquitination of heterotypic 'Lys-63'-/'Lys-48'-linked branched ubiquitin chains. Removes 'Lys-63' linked polyubiquitin chain of MAP3K7, which inhibits phosphorylation and blocks downstream activation of the JNK-p38 kinase cascades. Also removes 'Lys-63'-linked polyubiquitin chains of MAP3K1 and MA3P3K3, which inhibit their interaction with MAP2K1 and MAP2K2. The polypeptide is Ubiquitin carboxyl-terminal hydrolase CYLD (CYLD) (Pongo abelii (Sumatran orangutan)).